Consider the following 266-residue polypeptide: Type III pantothenate kinase (266 aa).

15–22 (EIGNSSTS) serves as a coordination point for ATP. Substrate contacts are provided by residues tyrosine 105 and 112-115 (GADR). Aspartate 114 serves as the catalytic Proton acceptor. Aspartate 135 lines the K(+) pocket. Position 138 (threonine 138) interacts with ATP. Threonine 191 contributes to the substrate binding site.

The protein belongs to the type III pantothenate kinase family. In terms of assembly, homodimer. NH4(+) is required as a cofactor. It depends on K(+) as a cofactor.

The protein localises to the cytoplasm. It catalyses the reaction (R)-pantothenate + ATP = (R)-4'-phosphopantothenate + ADP + H(+). Its pathway is cofactor biosynthesis; coenzyme A biosynthesis; CoA from (R)-pantothenate: step 1/5. Functionally, catalyzes the phosphorylation of pantothenate (Pan), the first step in CoA biosynthesis. In Chlorobium chlorochromatii (strain CaD3), this protein is Type III pantothenate kinase.